Consider the following 134-residue polypeptide: Methylglyoxal synthase (134 aa).

Residues 1 to 134 (MHIALIAHDE…DWRDLRRNDE (134 aa)) form the MGS-like domain. Substrate contacts are provided by residues H8, K12, 34-37 (TGTT), and 54-55 (SG). The active-site Proton donor/acceptor is D60. Residue H87 participates in substrate binding.

Belongs to the methylglyoxal synthase family.

It catalyses the reaction dihydroxyacetone phosphate = methylglyoxal + phosphate. Functionally, catalyzes the formation of methylglyoxal from dihydroxyacetone phosphate. This is Methylglyoxal synthase from Listeria welshimeri serovar 6b (strain ATCC 35897 / DSM 20650 / CCUG 15529 / CIP 8149 / NCTC 11857 / SLCC 5334 / V8).